Here is a 223-residue protein sequence, read N- to C-terminus: Protein-lysine N-methyltransferase CG9154 (223 aa).

Belongs to the class I-like SAM-binding methyltransferase superfamily. EFM5 family.

It is found in the cytoplasm. S-adenosyl-L-methionine-dependent protein-lysine N-methyltransferase that methylates elongation factor 1-alpha. This chain is Protein-lysine N-methyltransferase CG9154, found in Drosophila melanogaster (Fruit fly).